The primary structure comprises 330 residues: Aspartate--ammonia ligase (330 aa).

Belongs to the class-II aminoacyl-tRNA synthetase family. AsnA subfamily.

The protein resides in the cytoplasm. The enzyme catalyses L-aspartate + NH4(+) + ATP = L-asparagine + AMP + diphosphate + H(+). It functions in the pathway amino-acid biosynthesis; L-asparagine biosynthesis; L-asparagine from L-aspartate (ammonia route): step 1/1. This Pectobacterium carotovorum subsp. carotovorum (strain PC1) protein is Aspartate--ammonia ligase.